The primary structure comprises 442 residues: tRNA modification GTPase MnmE (442 aa).

Positions 27, 84, and 124 each coordinate (6S)-5-formyl-5,6,7,8-tetrahydrofolate. One can recognise a TrmE-type G domain in the interval 221–366; it reads GLHVVIVGAP…LLDALQAFAE (146 aa). Residues 231–236, 250–256, and 275–278 each bind GTP; these read NAGKSS, SKEAGTT, and DTAG. Serine 235 and threonine 256 together coordinate Mg(2+). Lysine 442 contributes to the (6S)-5-formyl-5,6,7,8-tetrahydrofolate binding site.

This sequence belongs to the TRAFAC class TrmE-Era-EngA-EngB-Septin-like GTPase superfamily. TrmE GTPase family. Homodimer. Heterotetramer of two MnmE and two MnmG subunits. Requires K(+) as cofactor.

The protein localises to the cytoplasm. Its function is as follows. Exhibits a very high intrinsic GTPase hydrolysis rate. Involved in the addition of a carboxymethylaminomethyl (cmnm) group at the wobble position (U34) of certain tRNAs, forming tRNA-cmnm(5)s(2)U34. This Brucella canis (strain ATCC 23365 / NCTC 10854 / RM-666) protein is tRNA modification GTPase MnmE.